The sequence spans 242 residues: UPF0246 protein SP_1547 (242 aa).

This sequence belongs to the UPF0246 family.

The protein is UPF0246 protein SP_1547 of Streptococcus pneumoniae serotype 4 (strain ATCC BAA-334 / TIGR4).